The sequence spans 391 residues: Galactarate dehydratase (D-threo-forming) (391 aa).

Substrate is bound at residue arginine 15. The Mg(2+) site is built by aspartate 42 and histidine 45. Substrate is bound at residue tyrosine 89. Tyrosine 90 functions as the Proton donor in the catalytic mechanism. The active-site Proton acceptor is tyrosine 164. Aspartate 193, glutamate 221, and histidine 246 together coordinate Mg(2+). Threonine 296 is a substrate binding site. Position 297 (threonine 297) interacts with Mg(2+). Residue arginine 385 coordinates substrate.

This sequence belongs to the mandelate racemase/muconate lactonizing enzyme family. The cofactor is Mg(2+).

It carries out the reaction galactarate = (2S,3R)-dihydroxy-5-oxohexanedioate + H2O. Functionally, catalyzes the regioselective dehydration of galactarate into 2-keto-D-threo-4,5-dihydroxyadipate ((2S,3R)-dihydroxy-5-oxohexanedioate). Is not active on other acid sugars. The protein is Galactarate dehydratase (D-threo-forming) of Oceanobacillus iheyensis (strain DSM 14371 / CIP 107618 / JCM 11309 / KCTC 3954 / HTE831).